Consider the following 399-residue polypeptide: Ankyrin repeat domain-containing protein 65 (399 aa).

10 ANK repeats span residues 40 to 69, 73 to 102, 106 to 135, 139 to 168, 176 to 205, 207 to 231, 235 to 264, 268 to 297, 301 to 330, and 334 to 363; these read QGWGHLLQAVWRGPAGLVTQLLRQGASVEE, AGRTPLHLAVLRGHAPLVRLLLQRGAPVGA, AGRTALHEAAWHGHSRVAELLLQRGASAAA, TGLTPLHWAAALGHTLLAARLLEAPGPGPA, RGWTAAHWAAAGGRLAVLELLAAGGAGLDG, LLVAAAAGRGAALRFLLARGARVDA, AGATALGLAAALGRSQDIEVLLGHGADPGI, HGRSALHRAAARGHLLAVQLLVTQGAEVDA, LGLTPLHHASREGHVEVAGCLLDRGAQVDA, and LRKTPLHLAAERGHGPTVGLLLSRGASPTL. The segment at 377–399 is disordered; it reads DLPQALPELGGGEKECEGIESTG.

This chain is Ankyrin repeat domain-containing protein 65 (ANKRD65), found in Homo sapiens (Human).